The following is a 130-amino-acid chain: Small ribosomal subunit protein uS9 (130 aa).

Residues 109–130 are disordered; sequence RKKERKKYGQRAARARFQYSKR.

Belongs to the universal ribosomal protein uS9 family.

The protein is Small ribosomal subunit protein uS9 of Oleidesulfovibrio alaskensis (strain ATCC BAA-1058 / DSM 17464 / G20) (Desulfovibrio alaskensis).